The following is a 66-amino-acid chain: Xenoxin-2 (66 aa).

4 cysteine pairs are disulfide-bonded: cysteine 3–cysteine 24, cysteine 17–cysteine 37, cysteine 43–cysteine 58, and cysteine 59–cysteine 64.

As to expression, expressed by the skin dorsal glands.

It localises to the secreted. Its function is as follows. Lacks alpha-neurotoxic activity, has apparently no antibacterial activity, nor anti-coagulant potency. In Xenopus laevis (African clawed frog), this protein is Xenoxin-2.